Here is a 227-residue protein sequence, read N- to C-terminus: MAYPLQLGFQDATSPVMEELLHFHDHTLMIIFLISSLVLYIIMLMLTTKLVHTNMMNVQEMEMIWTILPAIILILIALPSLHTLYMMDEINNPLLTIKTMGHQWFWSYEYTDYEDLAFDSYMITTDSLKFGELRLLEVDNRMVLPTDLPVRVLVSSEDVLHSWAVPSLGLKTDAIPGRLNQVTLTSMRPGLFYGQCSEICGANHSFMPIVLELVPLKYFESWSASLA.

Over 1-14 (MAYPLQLGFQDATS) the chain is Mitochondrial intermembrane. Residues 15-45 (PVMEELLHFHDHTLMIIFLISSLVLYIIMLM) traverse the membrane as a helical segment. Residues 46 to 59 (LTTKLVHTNMMNVQ) are Mitochondrial matrix-facing. Residues 60 to 87 (EMEMIWTILPAIILILIALPSLHTLYMM) form a helical membrane-spanning segment. At 88–227 (DEINNPLLTI…YFESWSASLA (140 aa)) the chain is on the mitochondrial intermembrane side. The Cu cation site is built by histidine 161, cysteine 196, glutamate 198, cysteine 200, histidine 204, and methionine 207. Glutamate 198 is a binding site for Mg(2+). Tyrosine 218 bears the Phosphotyrosine mark.

Belongs to the cytochrome c oxidase subunit 2 family. As to quaternary structure, component of the cytochrome c oxidase (complex IV, CIV), a multisubunit enzyme composed of 14 subunits. The complex is composed of a catalytic core of 3 subunits MT-CO1, MT-CO2 and MT-CO3, encoded in the mitochondrial DNA, and 11 supernumerary subunits COX4I, COX5A, COX5B, COX6A, COX6B, COX6C, COX7A, COX7B, COX7C, COX8 and NDUFA4, which are encoded in the nuclear genome. The complex exists as a monomer or a dimer and forms supercomplexes (SCs) in the inner mitochondrial membrane with NADH-ubiquinone oxidoreductase (complex I, CI) and ubiquinol-cytochrome c oxidoreductase (cytochrome b-c1 complex, complex III, CIII), resulting in different assemblies (supercomplex SCI(1)III(2)IV(1) and megacomplex MCI(2)III(2)IV(2)). Found in a complex with TMEM177, COA6, COX18, COX20, SCO1 and SCO2. Interacts with TMEM177 in a COX20-dependent manner. Interacts with COX20. Interacts with COX16. It depends on Cu cation as a cofactor.

It is found in the mitochondrion inner membrane. The catalysed reaction is 4 Fe(II)-[cytochrome c] + O2 + 8 H(+)(in) = 4 Fe(III)-[cytochrome c] + 2 H2O + 4 H(+)(out). Its function is as follows. Component of the cytochrome c oxidase, the last enzyme in the mitochondrial electron transport chain which drives oxidative phosphorylation. The respiratory chain contains 3 multisubunit complexes succinate dehydrogenase (complex II, CII), ubiquinol-cytochrome c oxidoreductase (cytochrome b-c1 complex, complex III, CIII) and cytochrome c oxidase (complex IV, CIV), that cooperate to transfer electrons derived from NADH and succinate to molecular oxygen, creating an electrochemical gradient over the inner membrane that drives transmembrane transport and the ATP synthase. Cytochrome c oxidase is the component of the respiratory chain that catalyzes the reduction of oxygen to water. Electrons originating from reduced cytochrome c in the intermembrane space (IMS) are transferred via the dinuclear copper A center (CU(A)) of subunit 2 and heme A of subunit 1 to the active site in subunit 1, a binuclear center (BNC) formed by heme A3 and copper B (CU(B)). The BNC reduces molecular oxygen to 2 water molecules using 4 electrons from cytochrome c in the IMS and 4 protons from the mitochondrial matrix. This Mammuthus primigenius (Siberian woolly mammoth) protein is Cytochrome c oxidase subunit 2 (MT-CO2).